The following is a 466-amino-acid chain: MIPVTSFAGKTVAVFGLGGSGLASCHALKAGGAEVIAADDNAENVAKAAQAGFITADLRDVSWAGFAALVLAPGVPLTHPVPHWSVLKAREAGVEVIGDIELFCRERRRHAPDAPFVAITGTNGKSTTTALIAHLTKVAGYDTQMGGNIGTAILSLEPPRTGRVHVIEMSSYQIDLTPSLDPSVGILLNVSEDHIDRHGTIAHYAAVKERLVAGVQAGGTSIVGVDDGYCRDIADRLDRAGKNVVRISVKNPLASGIHVEHGTIVRTAGGARSEVAKLGGIGSLRGLHNAQNAACAAAAALAMGISQDVLQDGLRSFPGLAHRMEQVGRRGNVLFVNDSKGTNADATAHALSSFADIFWIAGGKPKAGGITSLTGFFPRIRKAYLIGEAAQEFSGTLGTQVAHEISQTLDVAVEHAARDAEASGLTDAVVLLSPACASFDQYRNFEIRGTKFRELVQALPGVKPVV.

An ATP-binding site is contributed by 121 to 127; the sequence is GTNGKST.

It belongs to the MurCDEF family.

Its subcellular location is the cytoplasm. The catalysed reaction is UDP-N-acetyl-alpha-D-muramoyl-L-alanine + D-glutamate + ATP = UDP-N-acetyl-alpha-D-muramoyl-L-alanyl-D-glutamate + ADP + phosphate + H(+). It functions in the pathway cell wall biogenesis; peptidoglycan biosynthesis. In terms of biological role, cell wall formation. Catalyzes the addition of glutamate to the nucleotide precursor UDP-N-acetylmuramoyl-L-alanine (UMA). This chain is UDP-N-acetylmuramoylalanine--D-glutamate ligase, found in Bradyrhizobium diazoefficiens (strain JCM 10833 / BCRC 13528 / IAM 13628 / NBRC 14792 / USDA 110).